A 200-amino-acid polypeptide reads, in one-letter code: Protein C2-DOMAIN ABA-RELATED 5 (200 aa).

In terms of domain architecture, C2 spans 22–142 (VAGEKHKDRR…LKMHLHDLPS (121 aa)). Positions 57, 58, 63, 109, 110, 111, and 117 each coordinate Ca(2+).

Belongs to the plant CAR protein family. Binds to PYR/PYL/RCAR abscisic acid intracellular receptors in an ABA-independent manner, both at the plasma membrane and in the nucleus.

It is found in the cell membrane. It localises to the nucleus. Functionally, stimulates the GTPase/ATPase activities of Obg-like ATPases. Mediates the transient calcium-dependent interaction of PYR/PYL/RCAR abscisic acid (ABA) receptors with the plasma membrane and thus regulates ABA sensitivity. The polypeptide is Protein C2-DOMAIN ABA-RELATED 5 (Arabidopsis thaliana (Mouse-ear cress)).